A 1357-amino-acid polypeptide reads, in one-letter code: Ubiquitin carboxyl-terminal hydrolase 19 (1357 aa).

Disordered stretches follow at residues 1 to 52 (MSAG…PTKD), 162 to 239 (LSPI…SDSA), and 275 to 296 (VSPR…EKDD). Residues 1–1330 (MSAGTSATGP…TTSDEGCLRY (1330 aa)) are Cytoplasmic-facing. Basic and acidic residues-rich tracts occupy residues 28 to 52 (DRAN…PTKD) and 171 to 182 (SEPRRAKQEARN). Positions 51–140 (KDELLLDWRQ…VPLLTWPSLL (90 aa)) constitute a CS 1 domain. Residues 194 to 206 (SGASPGAQAGPSA) are compositionally biased toward low complexity. Ser-221 and Ser-283 each carry phosphoserine. A CS 2 domain is found at 321 to 423 (LAFVKNDSYE…RQSQRWGGLE (103 aa)). Residues 432–479 (AKVAVPTGPTPLDSTPPGGGPLPLTGQEEARAVEKEKPKARSEDSGLD) form a disordered region. The segment covering 437 to 457 (PTGPTPLDSTPPGGGPLPLTG) has biased composition (low complexity). The span at 459-475 (EEARAVEKEKPKARSED) shows a compositional bias: basic and acidic residues. The USP domain occupies 536 to 1253 (TGLVNLGNTC…YAYVLFYRRR (718 aa)). Residue Cys-545 is the Nucleophile of the active site. Residues Cys-830, Cys-833, Cys-847, Cys-850, Cys-856, Cys-860, His-868, and Cys-872 each coordinate Zn(2+). Residues 830-872 (CAACQRKQQSEDEKLKRCTRCYRVGYCNQFCQKTHWPDHKGLC) form an MYND-type zinc finger. A disordered region spans residues 962 to 981 (DTGAHRMWPPADRGPVPSTS). The Proton acceptor role is filled by His-1204. The segment covering 1259–1271 (RPPRAAHAEHHPD) has biased composition (basic and acidic residues). Disordered regions lie at residues 1259-1278 (RPPR…AAEA) and 1292-1320 (AEEE…PRGP). The chain crosses the membrane as a helical span at residues 1331 to 1351 (FVLGTVAALVALVLNVFYPLV). Residues 1352–1357 (SQSRWR) are Lumenal-facing.

Interacts with RNF123. Interacts with BIRC2/c-IAP1, BIRC3/c-IAP2 and XIAP/BIRC4. Interacts with HIF1A (via N-terminus). In terms of tissue distribution, expressed in testis, heart, kidney and skeletal muscle. Low levels of expression are detectable in all other tissues screened.

Its subcellular location is the endoplasmic reticulum membrane. It catalyses the reaction Thiol-dependent hydrolysis of ester, thioester, amide, peptide and isopeptide bonds formed by the C-terminal Gly of ubiquitin (a 76-residue protein attached to proteins as an intracellular targeting signal).. Its function is as follows. Deubiquitinating enzyme that regulates the degradation of various proteins by removing ubiquitin moieties, thereby preventing their proteasomal degradation. Stabilizes RNF123, which promotes CDKN1B degradation and contributes to cell proliferation. Decreases the levels of ubiquitinated proteins during skeletal muscle formation and acts to repress myogenesis. Modulates transcription of major myofibrillar proteins. Also involved in turnover of endoplasmic-reticulum-associated degradation (ERAD) substrates. Mechanistically, deubiquitinates and thereby stabilizes several E3 ligases involved in the ERAD pathway including SYVN1 or MARCHF6. Regulates the stability of other E3 ligases including BIRC2/c-IAP1 and BIRC3/c-IAP2 by preventing their ubiquitination. Required for cells to mount an appropriate response to hypoxia by rescuing HIF1A from degradation in a non-catalytic manner and by mediating the deubiquitination of FUNDC1. Attenuates mitochondrial damage and ferroptosis by targeting and stabilizing NADPH oxidase 4/NOX4. Negatively regulates TNF-alpha- and IL-1beta-triggered NF-kappa-B activation by hydrolyzing 'Lys-27'- and 'Lys-63'-linked polyubiquitin chains from MAP3K7. Modulates also the protein level and aggregation of polyQ-expanded huntingtin/HTT through HSP90AA1. The sequence is that of Ubiquitin carboxyl-terminal hydrolase 19 (Usp19) from Rattus norvegicus (Rat).